Here is a 474-residue protein sequence, read N- to C-terminus: MVSGCCRLDMSSYVSVLVLCSLLLWGSNSQQEQSSAAQRCFCQVTGYLDDCTCDVETIDHFNNYGLFPKLQQLVASDYFRYYKANLKKPCPFWEDNSHCGVKDCAVKPCPTDEVPGLKPPGFKYTEEANRAHEEIDDCEKEKRLSAVDESLSVEAQEAMLKWNRHDDSADNFCELDDEESPDAEYVDLLKNPERYTGYKGADTWRIWNSIYEENCFKPKAVQRPLNPLTSTRGENEGKVFYNWLDGLCVEKRAFYRLISGLHASINIHLCANYLLKDTWMDKIWGHNTAEFQKRFDATLTQGEGPKRLKNLYFIYLIELRAISKVLPFFERSSFLLYTGNETKDTETKKLLLDVLLDARDFPLHFDENSLFSGDKKEAAKLKEDFRQHFRNISKIMDCVGCFKCRLWGKLQTQGLGTALKILFSERQIENLSESNQPSEFHLTRQEIVALFNAFARISTSVKELENFRTLLEKV.

Residues 1 to 29 (MVSGCCRLDMSSYVSVLVLCSLLLWGSNS) form the signal peptide. Disulfide bonds link Cys-40–Cys-53, Cys-42–Cys-51, Cys-90–Cys-398, Cys-99–Cys-104, Cys-99–Cys-138, Cys-104–Cys-109, Cys-215–Cys-248, and Cys-401–Cys-404. FAD-binding residues include Arg-194, Thr-196, and Trp-207. FAD contacts are provided by Ser-259, His-262, Arg-294, and Arg-307. Asn-340 and Asn-391 each carry an N-linked (GlcNAc...) asparagine glycan. Asn-430 carries an N-linked (GlcNAc...) asparagine glycan.

This sequence belongs to the EROs family. As to quaternary structure, predominantly monomer. May function both as a monomer and a homodimer. FAD is required as a cofactor. The Cys-99/Cys-104 and Cys-401/Cys-404 disulfide bonds constitute the redox-active center. The Cys-99/Cys-104 disulfide bond may accept electron from protein disulfide isomerase (PDI) and funnel them to the active site disulfide Cys-401/Cys-404.

It is found in the endoplasmic reticulum membrane. With respect to regulation, enzyme activity is tightly regulated to prevent the accumulation of reactive oxygen species in the endoplasmic reticulum. Reversibly down-regulated by the formation of disulfide bonds between the active site Cys-99 and Cys-138, and between Cys-104 and Cys-109. Glutathione may be required to regulate its activity in the endoplasmic reticulum. Its function is as follows. Oxidoreductase involved in disulfide bond formation in the endoplasmic reticulum. Efficiently reoxidizes P4HB/PDI, the enzyme catalyzing protein disulfide formation, in order to allow P4HB to sustain additional rounds of disulfide formation. Following P4HB reoxidation, passes its electrons to molecular oxygen via FAD, leading to the production of reactive oxygen species (ROS) in the cell. Required for the folding of immunoglobulins. This chain is ERO1-like protein alpha, found in Xenopus tropicalis (Western clawed frog).